Here is a 230-residue protein sequence, read N- to C-terminus: Thiamine-triphosphatase (230 aa).

A2 is modified (N-acetylalanine). The region spanning 5–201 (LIEVERKFLP…AKLIVYLQRF (197 aa)) is the CYTH domain. Mg(2+)-binding residues include E7 and E9. The substrate site is built by K11, R55, R57, K65, and R125. Mg(2+) contacts are provided by D145, E157, and E159. E157 is a substrate binding site. A substrate-binding site is contributed by K193.

This sequence belongs to the ThTPase family. In terms of assembly, monomer. The cofactor is Mg(2+). Widely expressed but at a low level.

It localises to the cytoplasm. It catalyses the reaction thiamine triphosphate + H2O = thiamine diphosphate + phosphate + H(+). Its function is as follows. Hydrolase highly specific for thiamine triphosphate (ThTP). This chain is Thiamine-triphosphatase (THTPA), found in Homo sapiens (Human).